We begin with the raw amino-acid sequence, 319 residues long: Ribonuclease Z (319 aa).

Zn(2+) is bound by residues His62, His64, Asp66, His67, His145, Asp215, and His273. Asp66 functions as the Proton acceptor in the catalytic mechanism.

Belongs to the RNase Z family. Homodimer. Requires Zn(2+) as cofactor.

It catalyses the reaction Endonucleolytic cleavage of RNA, removing extra 3' nucleotides from tRNA precursor, generating 3' termini of tRNAs. A 3'-hydroxy group is left at the tRNA terminus and a 5'-phosphoryl group is left at the trailer molecule.. Functionally, zinc phosphodiesterase, which displays some tRNA 3'-processing endonuclease activity. Probably involved in tRNA maturation, by removing a 3'-trailer from precursor tRNA. In Borreliella burgdorferi (strain ATCC 35210 / DSM 4680 / CIP 102532 / B31) (Borrelia burgdorferi), this protein is Ribonuclease Z.